The sequence spans 100 residues: Putative protein BCL8 (100 aa).

Expressed in prostate and testis.

The chain is Putative protein BCL8 (NBEAP1) from Homo sapiens (Human).